A 268-amino-acid chain; its full sequence is tRNA pseudouridine synthase A (268 aa).

Asp-52 (nucleophile) is an active-site residue. Residue Tyr-110 coordinates substrate.

The protein belongs to the tRNA pseudouridine synthase TruA family. As to quaternary structure, homodimer.

It carries out the reaction uridine(38/39/40) in tRNA = pseudouridine(38/39/40) in tRNA. In terms of biological role, formation of pseudouridine at positions 38, 39 and 40 in the anticodon stem and loop of transfer RNAs. In Prochlorococcus marinus (strain MIT 9215), this protein is tRNA pseudouridine synthase A.